The following is a 566-amino-acid chain: MOB kinase activator-like 2 (566 aa).

Disordered stretches follow at residues Ala-28–Ser-57 and Gly-74–Ala-118. Over residues Ser-35–Ser-57 the composition is skewed to low complexity. Gly residues predominate over residues Gln-85 to Gly-115. Zn(2+) is bound by residues Cys-209, Cys-214, His-289, and His-294. 2 disordered regions span residues Gly-346–Ala-407 and Phe-498–Ala-541. Positions Leu-367–Ser-388 are enriched in low complexity. Residues Val-394–Ala-407 show a composition bias toward polar residues. The span at Phe-498 to Asn-507 shows a compositional bias: low complexity. Residues Leu-508–Ala-526 are compositionally biased toward basic residues.

The protein belongs to the MOB1/phocein family. Interacts with and activates trc, also interacts with wts.

It is found in the cytoplasm. It localises to the nucleus. Its function is as follows. Required for the normal morphogenesis of a variety of polarized outgrowths including epidermal hairs, bristles, arista laterals, and dendrites. The sequence is that of MOB kinase activator-like 2 (Mob2) from Drosophila melanogaster (Fruit fly).